Reading from the N-terminus, the 298-residue chain is GTP cyclohydrolase FolE2 (298 aa).

It belongs to the GTP cyclohydrolase IV family.

It carries out the reaction GTP + H2O = 7,8-dihydroneopterin 3'-triphosphate + formate + H(+). It functions in the pathway cofactor biosynthesis; 7,8-dihydroneopterin triphosphate biosynthesis; 7,8-dihydroneopterin triphosphate from GTP: step 1/1. In terms of biological role, converts GTP to 7,8-dihydroneopterin triphosphate. This chain is GTP cyclohydrolase FolE2, found in Xylella fastidiosa (strain M12).